The following is a 158-amino-acid chain: Transcription factor bHLH146 (158 aa).

Residues 77–90 (SSSSNPTTTTSSSS) are compositionally biased toward low complexity. Residues 77–110 (SSSSNPTTTTSSSSDGIRILERPDKEGGNEEGGI) are disordered. Basic and acidic residues predominate over residues 94-110 (RILERPDKEGGNEEGGI). A bHLH; atypical domain is found at 94 to 143 (RILERPDKEGGNEEGGIEERLRELKKLLPGGEEMNVEEMLSEIGNYIKCL).

The protein belongs to the bHLH protein family.

Its subcellular location is the nucleus. This chain is Transcription factor bHLH146 (BHLH146), found in Arabidopsis thaliana (Mouse-ear cress).